The following is an 828-amino-acid chain: Protein ELFN1 (828 aa).

A signal peptide spans 1 to 25 (MAGHGWGTAWVLVAAATLLHAGGLA). The Extracellular portion of the chain corresponds to 26–418 (QGDCWLIEGD…VPSPSTATHY (393 aa)). LRR repeat units lie at residues 61–82 (TIVD…SLSR), 85–106 (NLTY…AFSG), 109–130 (NLQV…MLRG), 133–154 (KLEY…AFWE), and 157–178 (NIVN…TFAG). Asn-85, Asn-90, and Asn-122 each carry an N-linked (GlcNAc...) asparagine glycan. The LRRCT domain occupies 190 to 253 (NPFYCSCELL…LSKLQSVCTE (64 aa)). The N-linked (GlcNAc...) asparagine glycan is linked to Asn-210. The disordered stretch occupies residues 258 to 293 (AEVLGPPRPVPGRSQPGHSPPPPPPEPSDMPCADDE). Residues 275-285 (HSPPPPPPEPS) are compositionally biased toward pro residues. The region spanning 312–399 (QTEARPSMKV…HNHTCLTICL (88 aa)) is the Fibronectin type-III domain. Asn-376 is a glycosylation site (N-linked (GlcNAc...) asparagine). The chain crosses the membrane as a helical span at residues 419 to 439 (IMTILGCLFGMVLVLGAVYYC). The Cytoplasmic portion of the chain corresponds to 440–828 (LRKRRRQEEK…WKGVSAQHKS (389 aa)). A phosphoserine mark is found at Ser-460 and Ser-646. 2 disordered regions span residues 627 to 674 (HHSV…IEKS) and 697 to 731 (KSRQ…GLGG). Residues 638–652 (RASTSSSGSARSPRT) are compositionally biased toward low complexity. Basic and acidic residues predominate over residues 697–706 (KSRQYGEHRH). Positions 714-725 (AEPPAPPPPPPT) are enriched in pro residues.

As to quaternary structure, interacts with PPP1CA. Selectively expressed in perialvear somatostatin (Sst)-containing interneurons.

It is found in the membrane. The protein localises to the cell projection. It localises to the dendrite. Postsynaptic protein that regulates circuit dynamics in the central nervous system by modulating the temporal dynamics of interneuron recruitment. Specifically present in excitatory synapses onto oriens-lacunosum molecular (OLM) interneurons and acts as a regulator of presynaptic release probability to direct the formation of highly facilitating pyramidal-OLM synapses. Inhibits phosphatase activity of protein phosphatase 1 (PP1) complexes. This is Protein ELFN1 (Elfn1) from Mus musculus (Mouse).